Here is a 507-residue protein sequence, read N- to C-terminus: ATP synthase subunit alpha, chloroplastic (507 aa).

170-177 (GDRQTGKT) provides a ligand contact to ATP.

It belongs to the ATPase alpha/beta chains family. As to quaternary structure, F-type ATPases have 2 components, CF(1) - the catalytic core - and CF(0) - the membrane proton channel. CF(1) has five subunits: alpha(3), beta(3), gamma(1), delta(1), epsilon(1). CF(0) has four main subunits: a, b, b' and c.

The protein localises to the plastid. Its subcellular location is the chloroplast thylakoid membrane. The enzyme catalyses ATP + H2O + 4 H(+)(in) = ADP + phosphate + 5 H(+)(out). Produces ATP from ADP in the presence of a proton gradient across the membrane. The alpha chain is a regulatory subunit. The sequence is that of ATP synthase subunit alpha, chloroplastic from Dioscorea elephantipes (Elephant's foot yam).